Consider the following 122-residue polypeptide: U19-hexatoxin-Hi1a (122 aa).

Positions 1–18 (MNTMIGFIVLLVSATVLG) are cleaved as a signal peptide. A propeptide spanning residues 19-80 (DPELDALRKE…YENSNFREKR (62 aa)) is cleaved from the precursor. Cystine bridges form between cysteine 81-cysteine 96, cysteine 88-cysteine 101, and cysteine 95-cysteine 116.

In terms of tissue distribution, expressed by the venom gland.

Its subcellular location is the secreted. Its function is as follows. Probable ion channel inhibitor. The protein is U19-hexatoxin-Hi1a of Hadronyche infensa (Fraser island funnel-web spider).